A 242-amino-acid polypeptide reads, in one-letter code: Small ribosomal subunit protein uS2 (242 aa).

Belongs to the universal ribosomal protein uS2 family.

The chain is Small ribosomal subunit protein uS2 from Aeromonas hydrophila subsp. hydrophila (strain ATCC 7966 / DSM 30187 / BCRC 13018 / CCUG 14551 / JCM 1027 / KCTC 2358 / NCIMB 9240 / NCTC 8049).